Here is a 153-residue protein sequence, read N- to C-terminus: Ubiquitin-conjugating enzyme E2-18 kDa (153 aa).

The UBC core domain maps to 2–149 (AATRRLTREL…AEEFTKKNAE (148 aa)). The active-site Glycyl thioester intermediate is Cys-86.

This sequence belongs to the ubiquitin-conjugating enzyme family.

The enzyme catalyses S-ubiquitinyl-[E1 ubiquitin-activating enzyme]-L-cysteine + [E2 ubiquitin-conjugating enzyme]-L-cysteine = [E1 ubiquitin-activating enzyme]-L-cysteine + S-ubiquitinyl-[E2 ubiquitin-conjugating enzyme]-L-cysteine.. It functions in the pathway protein modification; protein ubiquitination. In terms of biological role, catalyzes the covalent attachment of ubiquitin to other proteins. The polypeptide is Ubiquitin-conjugating enzyme E2-18 kDa (Ubc84D) (Drosophila melanogaster (Fruit fly)).